Reading from the N-terminus, the 452-residue chain is 3-phosphoshikimate 1-carboxyvinyltransferase (452 aa).

3-phosphoshikimate contacts are provided by Lys-24, Ser-25, and Arg-29. Residue Lys-24 participates in phosphoenolpyruvate binding. Residues Gly-95 and Arg-123 each coordinate phosphoenolpyruvate. Ser-167, Gln-169, Asp-319, and Lys-346 together coordinate 3-phosphoshikimate. Gln-169 contributes to the phosphoenolpyruvate binding site. Catalysis depends on Asp-319, which acts as the Proton acceptor. Phosphoenolpyruvate-binding residues include Arg-350 and Arg-394.

It belongs to the EPSP synthase family. In terms of assembly, monomer.

The protein localises to the cytoplasm. It carries out the reaction 3-phosphoshikimate + phosphoenolpyruvate = 5-O-(1-carboxyvinyl)-3-phosphoshikimate + phosphate. It functions in the pathway metabolic intermediate biosynthesis; chorismate biosynthesis; chorismate from D-erythrose 4-phosphate and phosphoenolpyruvate: step 6/7. Functionally, catalyzes the transfer of the enolpyruvyl moiety of phosphoenolpyruvate (PEP) to the 5-hydroxyl of shikimate-3-phosphate (S3P) to produce enolpyruvyl shikimate-3-phosphate and inorganic phosphate. In Phenylobacterium zucineum (strain HLK1), this protein is 3-phosphoshikimate 1-carboxyvinyltransferase.